Reading from the N-terminus, the 343-residue chain is Cell cycle control protein 50C (343 aa).

At 1-34 (MKRKCQDYESRLPDNTAVKQQQLPAFRLQLTASE) the chain is on the cytoplasmic side. The helical transmembrane segment at 35 to 55 (ILSGFFAIGLFCLGMGIILLL) threads the bilayer. The Extracellular segment spans residues 56–306 (SAKSIKEVEI…STLTWSGGSS (251 aa)). Residues asparagine 66, asparagine 164, asparagine 205, and asparagine 265 are each glycosylated (N-linked (GlcNAc...) asparagine). A helical membrane pass occupies residues 307–327 (LFLALAYLVTGAVTLLASFSM). Residues 328-343 (MALHLKLKERKTFFLQ) lie on the Cytoplasmic side of the membrane.

It belongs to the CDC50/LEM3 family.

The protein resides in the membrane. The chain is Cell cycle control protein 50C (TMEM30C) from Bos taurus (Bovine).